A 156-amino-acid chain; its full sequence is Inner membrane protein YlaC (156 aa).

The Cytoplasmic segment spans residues 1–35 (MTEIQRLLTETIESLNTREKRDNKPRFSISFIRKH). The chain crosses the membrane as a helical span at residues 36-56 (PGLFIGMYVAFFATLAVMLQS). The Periplasmic segment spans residues 57–58 (ET). Residues 59-79 (LSGSVWLLVVLFILLNGFFFF) form a helical membrane-spanning segment. Residues 80 to 156 (DVYPRYRYED…FTLARAESTS (77 aa)) are Cytoplasmic-facing.

Its subcellular location is the cell inner membrane. This chain is Inner membrane protein YlaC (ylaC), found in Escherichia coli (strain K12).